A 1003-amino-acid chain; its full sequence is Serine/threonine-protein kinase spk-1 (1003 aa).

3 disordered regions span residues 92 to 112, 169 to 309, and 337 to 408; these read NSTN…TQNE, NEND…SATS, and RPSI…KRGG. A compositionally biased stretch (acidic residues) spans 202-211; the sequence is SDEEDVESQD. Positions 248-265 are enriched in basic and acidic residues; the sequence is SNDDKNEKDVLVDEDTSK. Residues 285-300 show a composition bias toward low complexity; that stretch reads TIDSSVSSSTSSSSTG. The segment covering 346-359 has biased composition (basic and acidic residues); sequence KKTEVNANEERLDD. In terms of domain architecture, Protein kinase spans 422 to 904; it reads YHVIRKLGWG…AKIALKHPFL (483 aa). ATP contacts are provided by residues 428–436 and lysine 451; that span reads LGWGHFSTV. The active-site Proton acceptor is aspartate 555. Positions 927–1003 are disordered; the sequence is DGLIPEPFDG…DIERFQLDLQ (77 aa). Positions 936 to 953 are enriched in basic and acidic residues; sequence GNEHQEVYRDENDSRSAS. Low complexity predominate over residues 954–964; that stretch reads ERSANSRSAGG. Polar residues predominate over residues 983–992; the sequence is VITNNETTDI. Residues 994-1003 are compositionally biased toward basic and acidic residues; it reads DIERFQLDLQ.

Belongs to the protein kinase superfamily. Ser/Thr protein kinase family. In terms of assembly, interacts with rsp-3. As to expression, predominantly coexpressed with rsp-3 in adult hermaphrodite germlines.

It carries out the reaction L-seryl-[protein] + ATP = O-phospho-L-seryl-[protein] + ADP + H(+). The catalysed reaction is L-threonyl-[protein] + ATP = O-phospho-L-threonyl-[protein] + ADP + H(+). Its function is as follows. Required for embryogenesis and germline development in both adult hermaphrodites and males. SR-protein kinase (SRPK) that binds directly to and phosphorylates the RS domain of rsp-3/CeSF2 in vitro. The chain is Serine/threonine-protein kinase spk-1 (spk-1) from Caenorhabditis elegans.